The following is a 519-amino-acid chain: Protein twist (519 aa).

Disordered regions lie at residues 53–77, 131–156, 301–321, and 368–389; these read MQQQ…QQQY, NFEQ…VATA, YEAY…SDRD, and FRKP…DEFS. 2 stretches are compositionally biased toward low complexity: residues 54–76 and 134–146; these read QQQQ…QQQQ. Positions 308–317 are enriched in polar residues; that stretch reads NSLNGSTYSS. The span at 368–379 shows a compositional bias: basic residues; the sequence is FRKPRRRLKRKP. One can recognise a bHLH domain in the interval 390–441; it reads NQRVMANVRERQRTQSLNDAFKALQQIIPTLPSDKLSKIQTLKLATRYIDFL.

As to quaternary structure, efficient DNA binding requires dimerization with another bHLH protein. Homodimer.

It localises to the nucleus. Functionally, involved in the establishment and dorsoventral patterning of germ layers in the embryo. This Drosophila virilis (Fruit fly) protein is Protein twist.